A 330-amino-acid chain; its full sequence is Adenylate isopentenyltransferase 5, chloroplastic (330 aa).

Residues 1-39 (MKPCMTALRQVIQPLSLNFQGNMVDVPFFRRKDKVVFVM) constitute a chloroplast transit peptide. ATP is bound at residue 40–47 (GATGTGKS).

This sequence belongs to the IPP transferase family. Expressed in root primordia, columella root caps, upper part of young inflorescences, and fruit abscission zones.

It localises to the plastid. Its subcellular location is the chloroplast. The catalysed reaction is dimethylallyl diphosphate + ADP = N(6)-(dimethylallyl)adenosine 5'-diphosphate + diphosphate. It catalyses the reaction dimethylallyl diphosphate + ATP = N(6)-(dimethylallyl)adenosine 5'-triphosphate + diphosphate. Its function is as follows. Involved in cytokinin biosynthesis. Catalyzes the transfer of an isopentenyl group from dimethylallyl diphosphate (DMAPP) to ATP and ADP. The polypeptide is Adenylate isopentenyltransferase 5, chloroplastic (IPT5) (Arabidopsis thaliana (Mouse-ear cress)).